Here is a 225-residue protein sequence, read N- to C-terminus: 3-dehydroquinate dehydratase (225 aa).

3-dehydroquinate is bound by residues S6, E30–R32, and R62. The active-site Proton donor/acceptor is H118. K143 functions as the Schiff-base intermediate with substrate in the catalytic mechanism. The 3-dehydroquinate site is built by R186, S205, and Q209.

It belongs to the type-I 3-dehydroquinase family. In terms of assembly, homodimer.

It carries out the reaction 3-dehydroquinate = 3-dehydroshikimate + H2O. It functions in the pathway metabolic intermediate biosynthesis; chorismate biosynthesis; chorismate from D-erythrose 4-phosphate and phosphoenolpyruvate: step 3/7. Involved in the third step of the chorismate pathway, which leads to the biosynthesis of aromatic amino acids. Catalyzes the cis-dehydration of 3-dehydroquinate (DHQ) and introduces the first double bond of the aromatic ring to yield 3-dehydroshikimate. This chain is 3-dehydroquinate dehydratase, found in Streptococcus pneumoniae (strain ATCC 700669 / Spain 23F-1).